The following is a 382-amino-acid chain: Acetyltransferase eriL (382 aa).

6 helical membrane passes run 5–25, 33–53, 59–79, 146–166, 192–212, and 335–355; these read LQPLPGGLQVAVQACLFLGAV, ALLFPPVLAMSLYMLLYTTTG, IVTWSLITTSLLQGSDILLIN, TLFYFVVLDLVHTFIVLSPVF, LWSYMSFGYSAASVVLVALGV, and GYMWTFLWFVFTLPHWMDPQF.

This sequence belongs to the wax synthase family.

Its subcellular location is the membrane. The enzyme catalyses cyathatriol + acetyl-CoA = 11-O-acetylcyathatriol + CoA. It carries out the reaction cyathin A3 + acetyl-CoA = 11-O-acetylcyathin A3 + CoA. The protein operates within secondary metabolite biosynthesis. Functionally, acetyltransferase; part of the gene cluster that mediates the biosynthesis of erinacines, cyathane-xylosides that show unique biological activities, including leishmanicidal activity, stimulating activity for nerve growth-factor synthesis, and agonistic activity toward the kappa opioid receptor. Within the pathway, eriL converts cyathatriol into 11-O-acetyl-cyathatriol. EriL is also able to acetylate cyathin A3 to produce 11-O-acetylcyathin A3. The first step of the erinacines biosynthesis pathway is catalyzed by the geranylgeranyl diphosphate (GGPP) synthase eriE via conversion of farnesyl pyrophosphate and isopentyl pyrophosphate into geranylgeranyl pyrophosphate (GGPP). GGPP is then substrate of the diterpene cyclase eriG for the production of cyatha-3,12-diene. The cytochrome P450 monooxygenase eriI then hydroxylates cyatha-3,12-diene at C-14 of the seven-membered ring to produce erinacol, which is further hydroxylated at C-15 by the cytochrome P450 monooxygenase eriC to yield cyathadiol. The cytochrome P450 monooxygenase eriA then catalyzes C-11 hydroxylation in the presence of the short chain dehydrogenase/reductase (SDR) eriH, which leads to the production of cyathatriol. The acetyltransferase eriL converts cyathatriol into 11-O-acetyl-cyathatriol. The SDR eriH catalyzes further oxidation of 11-O-acetyl-cyathatriol into 1-O-acetylcyathin A3. Finally, the glycosyl transferase eriJ tranfers xylose from UDP-xylose onto C-14 of 11-O-acetyl-cyathatriol to form eracine Q. EriJ is also able to convert 11-O-acetyl-cyathatriol to eracine Q2 by using UDP-D-glucose as cosubstrate, but at a lower rate. In Hericium erinaceus (Lion's mane mushroom), this protein is Acetyltransferase eriL.